A 61-amino-acid chain; its full sequence is Protein MATERNALLY EXPRESSED GENE 6 (61 aa).

Cysteine 38 and cysteine 60 are disulfide-bonded.

This sequence belongs to the MEG family. As to expression, ubiquitous.

The chain is Protein MATERNALLY EXPRESSED GENE 6 (MEG6) from Zea mays (Maize).